Here is a 132-residue protein sequence, read N- to C-terminus: Small ribosomal subunit protein uS8 (132 aa).

This sequence belongs to the universal ribosomal protein uS8 family. As to quaternary structure, part of the 30S ribosomal subunit. Contacts proteins S5 and S12.

Its function is as follows. One of the primary rRNA binding proteins, it binds directly to 16S rRNA central domain where it helps coordinate assembly of the platform of the 30S subunit. The sequence is that of Small ribosomal subunit protein uS8 from Anaeromyxobacter dehalogenans (strain 2CP-C).